We begin with the raw amino-acid sequence, 78 residues long: Ferredoxin 7Fe (78 aa).

4Fe-4S ferredoxin-type domains are found at residues 2–29 (AYVITEPCIGTKDASCVEVCPVDCIHEG) and 31–60 (DQYYIDPDVCIDCGACEAVCPVSAIYHEDF). The [3Fe-4S] cluster site is built by C9 and C17. [4Fe-4S] cluster is bound by residues C21, C40, C43, and C46. C50 provides a ligand contact to [3Fe-4S] cluster.

In terms of assembly, monomer. It depends on [4Fe-4S] cluster as a cofactor. Requires [3Fe-4S] cluster as cofactor.

In Hydrogenibacillus schlegelii (Bacillus schlegelii), this protein is Ferredoxin 7Fe (fdxA).